The primary structure comprises 303 residues: Diacylglycerol kinase (303 aa).

Residues 1 to 132 enclose the DAGKc domain; sequence MKRARIIYNP…IDIGQVNGQY (132 aa). Residues 9 to 13, T40, 66 to 72, and T93 each bind ATP; these read NPTSG and GDGTINE. 3 residues coordinate Mg(2+): S213, D216, and M218. E273 acts as the Proton acceptor in catalysis.

Belongs to the diacylglycerol/lipid kinase family. The cofactor is Mg(2+).

The enzyme catalyses a 1,2-diacyl-sn-glycerol + ATP = a 1,2-diacyl-sn-glycero-3-phosphate + ADP + H(+). The catalysed reaction is 1,2-di-(9Z-octadecenoyl)-sn-glycerol + ATP = 1,2-di-(9Z-octadecenoyl)-sn-glycero-3-phosphate + ADP + H(+). In terms of biological role, catalyzes the phosphorylation of diacylglycerol (DAG) into phosphatidic acid. Is a key enzyme involved in the production of lipoteichoic acid by reintroducing DAG formed from the breakdown of membrane phospholipids into the phosphatidylglycerol biosynthetic pathway. Is more active toward long-chain DAG compared with short-chain DAG. Is not able to phosphorylate substrates other than DAG, such as monoacylglycerol, ceramide, undecaprenol, phosphatidylinositol, or sphingosine. The polypeptide is Diacylglycerol kinase (dagK) (Bacillus subtilis (strain 168)).